The following is a 467-amino-acid chain: Venom prothrombin activator pseutarin-C catalytic subunit (467 aa).

The N-terminal stretch at methionine 1–serine 22 is a signal peptide. The propeptide occupies asparagine 23–arginine 40. Residues alanine 41–aspartate 86 form the Gla domain. 4-carboxyglutamate occurs at positions 46, 47, 54, 56, 59, 60, 65, 66, 69, and 72. An intrachain disulfide couples cysteine 57 to cysteine 62. Positions aspartate 86–glutamate 122 constitute an EGF-like 1; calcium-binding domain. Intrachain disulfides connect cysteine 90–cysteine 101, cysteine 95–cysteine 110, cysteine 112–cysteine 121, cysteine 129–cysteine 140, cysteine 136–cysteine 149, cysteine 151–cysteine 164, cysteine 172–cysteine 329, cysteine 216–cysteine 221, cysteine 236–cysteine 252, cysteine 377–cysteine 391, and cysteine 402–cysteine 430. O-linked (Hex...) serine glycosylation occurs at serine 92. The EGF-like 2 domain maps to cysteine 129–cysteine 164. Positions arginine 182–arginine 209 are cleaved as a propeptide — activation peptide. The region spanning isoleucine 210–arginine 454 is the Peptidase S1 domain. Histidine 251 functions as the Charge relay system in the catalytic mechanism. Asparagine 254 carries an N-linked (GlcNAc...) asparagine glycan. Residue aspartate 309 is the Charge relay system of the active site. Serine 406 serves as the catalytic Charge relay system.

It belongs to the peptidase S1 family. Snake venom subfamily. Heterodimer of a light and a heavy chains; disulfide-linked. Is associated with pseutarin-C non-catalytic subunit (AC Q7SZN0) in a non-covalent manner. Post-translationally, gamma-carboxyglutamate residues are formed by vitamin K dependent carboxylation. These residues are essential for the binding of calcium. As to expression, expressed by the venom gland.

It is found in the secreted. The enzyme catalyses Selective cleavage of Arg-|-Thr and then Arg-|-Ile bonds in prothrombin to form thrombin.. Activated by calcium and negatively charged phospholipids. Snake prothrombin activator that attacks the hemostatic system of prey. This non-catalytic subunit is functionally similar to blood coagulation factor V. It serves as a critical cofactor for the prothrombinase activity of the catalytic subunit, which is similar to the blood coagulation factor X. The complex converts prothrombin to thrombin by sequential cleavage at two positions, Arg-320 followed by Arg-271. Cleavage at Arg-320 produces an active intermediate known as meizothrombin. Meizothrombin is the 'second' substrate for prothrombinase, and it docks in an altered manner to present the second cleavage site (271). Cleavage at Arg-271 releases active thrombin from its pro-fragment. This order of events is reversed if the protease component of prothrombinase is used on its own, suggesting that the 271 site is inherently more accessible to proteolysis. The complex converts prothrombin to thrombin in presence but also in the absence of membrane. This is Venom prothrombin activator pseutarin-C catalytic subunit from Pseudonaja textilis (Eastern brown snake).